Here is a 355-residue protein sequence, read N- to C-terminus: Histidinol-phosphate aminotransferase (355 aa).

Lysine 211 is subject to N6-(pyridoxal phosphate)lysine.

It belongs to the class-II pyridoxal-phosphate-dependent aminotransferase family. Histidinol-phosphate aminotransferase subfamily. As to quaternary structure, homodimer. Pyridoxal 5'-phosphate serves as cofactor.

It catalyses the reaction L-histidinol phosphate + 2-oxoglutarate = 3-(imidazol-4-yl)-2-oxopropyl phosphate + L-glutamate. It functions in the pathway amino-acid biosynthesis; L-histidine biosynthesis; L-histidine from 5-phospho-alpha-D-ribose 1-diphosphate: step 7/9. This is Histidinol-phosphate aminotransferase from Aeromonas salmonicida (strain A449).